Here is a 255-residue protein sequence, read N- to C-terminus: MLLGVNIDHIAVLREARKVNDPDLLEAAFLSANLADQITIHVREDRRHANEKDLENILKYCKCVVNLECSIDMIEYALKYKPSRVTLVPEKRQELTTEGGLNLNNDKLQEVILKLKQEQIEVSLFIDPNLEDIEKSSLLKADFIELHTGLYANIYNALYTNINQTSYALPELILSKNELKKLLENELQRLRQSASLAKSLNLNVAAGHGLNYKNVKNIVDILEIKELNIGQSIVARSVFVGLEKAILEMRALIKR.

3-amino-2-oxopropyl phosphate is bound at residue Asn6. Residue 8-9 (DH) participates in 1-deoxy-D-xylulose 5-phosphate binding. Arg17 is a binding site for 3-amino-2-oxopropyl phosphate. Residue His41 is the Proton acceptor of the active site. Positions 43 and 48 each coordinate 1-deoxy-D-xylulose 5-phosphate. The active-site Proton acceptor is the Glu68. Thr96 lines the 1-deoxy-D-xylulose 5-phosphate pocket. His208 (proton donor) is an active-site residue. Residues Gly209 and 230–231 (GQ) contribute to the 3-amino-2-oxopropyl phosphate site.

Belongs to the PNP synthase family. Homooctamer; tetramer of dimers.

It is found in the cytoplasm. It carries out the reaction 3-amino-2-oxopropyl phosphate + 1-deoxy-D-xylulose 5-phosphate = pyridoxine 5'-phosphate + phosphate + 2 H2O + H(+). It functions in the pathway cofactor biosynthesis; pyridoxine 5'-phosphate biosynthesis; pyridoxine 5'-phosphate from D-erythrose 4-phosphate: step 5/5. Catalyzes the complicated ring closure reaction between the two acyclic compounds 1-deoxy-D-xylulose-5-phosphate (DXP) and 3-amino-2-oxopropyl phosphate (1-amino-acetone-3-phosphate or AAP) to form pyridoxine 5'-phosphate (PNP) and inorganic phosphate. The protein is Pyridoxine 5'-phosphate synthase of Campylobacter lari (strain RM2100 / D67 / ATCC BAA-1060).